The sequence spans 142 residues: MAAMTVQLDIVSAENSIFSGLVAHLQVTGSEGDLGVMPGHAPLLTNIKPGMARIVKQDGKEEVFYLSGGILEVQPSSVSVLADVVKRADEIDEKAAEEAKRRAESAMADAGADFNYAAAANELAQAVAQLRVVDTIKKNIAR.

The protein belongs to the ATPase epsilon chain family. As to quaternary structure, F-type ATPases have 2 components, CF(1) - the catalytic core - and CF(0) - the membrane proton channel. CF(1) has five subunits: alpha(3), beta(3), gamma(1), delta(1), epsilon(1). CF(0) has three main subunits: a, b and c.

The protein resides in the cell inner membrane. Functionally, produces ATP from ADP in the presence of a proton gradient across the membrane. This chain is ATP synthase epsilon chain, found in Shewanella woodyi (strain ATCC 51908 / MS32).